Reading from the N-terminus, the 433-residue chain is Dihydrolipoyllysine-residue acetyltransferase component of pyruvate dehydrogenase complex (433 aa).

Residues 2 to 77 (AFEFRLPDIG…VVGDVIVKID (76 aa)) enclose the Lipoyl-binding domain. Lys43 bears the N6-lipoyllysine mark. Disordered regions lie at residues 80-134 (DAEE…PSVR) and 164-204 (YLNG…FPET). 2 stretches are compositionally biased toward basic and acidic residues: residues 84 to 103 (MQFK…KEQE) and 117 to 126 (EKTEVDESKT). A Peripheral subunit-binding (PSBD) domain is found at 128–165 (KAMPSVRKYARENGVNIKAVNGSGKNGRITKEDIDAYL). Low complexity predominate over residues 166 to 188 (NGGSSEEGSNTSVASESTSSDVV). The active site involves His404.

Belongs to the 2-oxoacid dehydrogenase family. Forms a 24-polypeptide structural core with octahedral symmetry. The cofactor is (R)-lipoate.

It catalyses the reaction N(6)-[(R)-dihydrolipoyl]-L-lysyl-[protein] + acetyl-CoA = N(6)-[(R)-S(8)-acetyldihydrolipoyl]-L-lysyl-[protein] + CoA. The pyruvate dehydrogenase complex catalyzes the overall conversion of pyruvate to acetyl-CoA and CO(2). It contains multiple copies of three enzymatic components: pyruvate dehydrogenase (E1), dihydrolipoamide acetyltransferase (E2) and lipoamide dehydrogenase (E3). This is Dihydrolipoyllysine-residue acetyltransferase component of pyruvate dehydrogenase complex (pdhC) from Staphylococcus epidermidis (strain ATCC 12228 / FDA PCI 1200).